The following is a 609-amino-acid chain: Alpha-glycerophosphate oxidase (609 aa).

21–49 contacts FAD; the sequence is DLLVIGGGITGAGLTLQAAAAGMKVAVLE.

It belongs to the FAD-dependent glycerol-3-phosphate dehydrogenase family. The cofactor is FAD.

The protein resides in the cytoplasm. The enzyme catalyses sn-glycerol 3-phosphate + O2 = dihydroxyacetone phosphate + H2O2. This chain is Alpha-glycerophosphate oxidase (glpO), found in Lactococcus lactis subsp. lactis (strain IL1403) (Streptococcus lactis).